The sequence spans 185 residues: Homeobox-leucine zipper protein ATHB-22 (185 aa).

The segment at residues 76-135 (TSEQLKFLERSFQEEIKLNPDRKMKLNPDRKMKLSKELGLQPRQIAVWFQNRKARWKNKQ) is a DNA-binding region (homeobox). A leucine-zipper region spans residues 136 to 164 (LEHLYESLRQEFDIVSREKELLQEELIQL).

It belongs to the HD-ZIP homeobox family. Class I subfamily. As to expression, expressed in siliques.

It is found in the nucleus. In terms of biological role, probable transcription factor. This chain is Homeobox-leucine zipper protein ATHB-22 (ATHB-22), found in Arabidopsis thaliana (Mouse-ear cress).